Consider the following 261-residue polypeptide: uncharacterized protein (261 aa).

Transmembrane regions (helical) follow at residues 15 to 35 (WYSV…IIVC), 87 to 107 (VYLI…IRNA), and 131 to 151 (LLLY…YFLI). Residues 234 to 246 (LEEKKAKRRQNAE) show a composition bias toward basic and acidic residues. The tract at residues 234–261 (LEEKKAKRRQNAERRKKRREIAMEQREQ) is disordered.

The protein localises to the membrane. This is an uncharacterized protein from Caenorhabditis elegans.